A 318-amino-acid chain; its full sequence is Ribose-phosphate pyrophosphokinase 2 (318 aa).

Residue 96–101 (RQDKKD) participates in ATP binding. 4 residues coordinate Mg(2+): Asp128, His130, Asp139, and Asp143. An ATP-binding site is contributed by His130. The interval 212–227 (KDRVAILVDDMADTCG) is binding of phosphoribosylpyrophosphate.

This sequence belongs to the ribose-phosphate pyrophosphokinase family. As to quaternary structure, homodimer. The active form is probably a hexamer composed of 3 homodimers. Requires Mg(2+) as cofactor.

It carries out the reaction D-ribose 5-phosphate + ATP = 5-phospho-alpha-D-ribose 1-diphosphate + AMP + H(+). The protein operates within metabolic intermediate biosynthesis; 5-phospho-alpha-D-ribose 1-diphosphate biosynthesis; 5-phospho-alpha-D-ribose 1-diphosphate from D-ribose 5-phosphate (route I): step 1/1. With respect to regulation, activated by magnesium and inorganic phosphate. Competitively or non-competitively inhibited by ADP, 2,3-bisphosphoglyceride or GDP. Catalyzes the synthesis of phosphoribosylpyrophosphate (PRPP) that is essential for nucleotide synthesis. The polypeptide is Ribose-phosphate pyrophosphokinase 2 (Prps2) (Mus musculus (Mouse)).